A 140-amino-acid chain; its full sequence is Tumor protein D55 (140 aa).

Residues 1 to 28 (MPHARTETSVGTYESHSTSELEDLTEPE) form a disordered region. The span at 7–18 (ETSVGTYESHST) shows a compositional bias: polar residues. The stretch at 28–57 (EQRELKTKLTKLEAEIVTLRHVLAAKERRC) forms a coiled coil.

Belongs to the TPD52 family. In terms of assembly, interacts with TPD52L2. As to expression, specifically expressed in testis. Expressed at 5.6-fold higher levels in adult testis than in fetal testis.

This Homo sapiens (Human) protein is Tumor protein D55 (TPD52L3).